The sequence spans 474 residues: Cbb3-type cytochrome c oxidase subunit CcoN1 (474 aa).

The Cytoplasmic segment spans residues 1–16 (MNTATSTAYSYKVVRQ). A helical transmembrane segment spans residues 17-37 (FAIMTVVWGIVGMGLGVFIAA). Topologically, residues 38 to 60 (QLAWPFLNFDLPWTSFGRLRPLH) are periplasmic. Histidine 60 contributes to the heme b binding site. A helical transmembrane segment spans residues 61–81 (TNAVIFAFGGCALFATSYYSV). Topologically, residues 82 to 96 (QRTCQTTLFAPKLAA) are cytoplasmic. Residues 97 to 117 (FTFWGWQLVILLAAISLPLGF) traverse the membrane as a helical segment. The Periplasmic portion of the chain corresponds to 118 to 129 (TSSKEYAELEWP). The chain crosses the membrane as a helical span at residues 130-150 (IDILITIVWVAYAVVFFGTLA). At 151–156 (KRKVKH) the chain is on the cytoplasmic side. The chain crosses the membrane as a helical span at residues 157–177 (IYVGNWFFGAFILTVAILHVV). Residues 178–205 (NNLEIPVTAMKSYSLYAGATDAMVQWWY) are Periplasmic-facing. The chain crosses the membrane as a helical span at residues 206–226 (GHNAVGFFLTAGFLGIMYYFV). Residue histidine 207 coordinates Cu cation. Topologically, residues 227-238 (PKQAERPVYSYR) are cytoplasmic. The helical transmembrane segment at 239–259 (LSIVHFWALITVYIWAGPHHL) threads the bilayer. Residues histidine 257 and histidine 258 each coordinate Cu cation. Over 260-270 (HYTALPDWAQS) the chain is Periplasmic. A helical membrane pass occupies residues 271 to 291 (LGMVMSLILLAPSWGGMINGM). Over 292–308 (MTLSGAWHKLRSDPILR) the chain is Cytoplasmic. The helical transmembrane segment at 309–329 (FLVVSLAFYGMSTFEGPMMAI) threads the bilayer. The Periplasmic segment spans residues 330–345 (KTVNALSHYTDWTIGH). Heme b-binding residues include histidine 345 and histidine 347. The helical transmembrane segment at 346 to 366 (VHAGALGWVAMVSIGALYHLV) threads the bilayer. Residues 367-384 (PKVFGREQMHSIGLINTH) lie on the Cytoplasmic side of the membrane. The helical transmembrane segment at 385 to 405 (FWLATIGTVLYIASMWVNGIA) threads the bilayer. Over 406–432 (QGLMWRAINDDGTLTYSFVESLEASHP) the chain is Periplasmic. A helical transmembrane segment spans residues 433–453 (GFVVRMIGGAIFFAGMLVMAY). Topologically, residues 454–474 (NTWRTVQAAKPAEYDAAAQIA) are cytoplasmic.

The protein belongs to the heme-copper respiratory oxidase family. Component of the cbb3-type cytochrome c oxidase at least composed of CcoN, CcoO, CcoQ and CcoP. The cofactor is Cu(2+). Requires heme b as cofactor.

The protein localises to the cell inner membrane. The enzyme catalyses 4 Fe(II)-[cytochrome c] + O2 + 8 H(+)(in) = 4 Fe(III)-[cytochrome c] + 2 H2O + 4 H(+)(out). It functions in the pathway energy metabolism; oxidative phosphorylation. In terms of biological role, cbb3-type cytochrome c oxidase is the component of the respiratory chain that catalyzes the reduction of oxygen to water. Subunits CcoN and CcoO form the functional core of the enzyme complex. Subunits CcoP and CcoQ may optionally bind to the core. CcoN is the catalytic subunit of the enzyme. Electrons originating in cytochrome c or a quinol are transferred to the bimetallic center formed by a high-spin heme and copper B. The complex also functions as a proton pump. In Stutzerimonas stutzeri (Pseudomonas stutzeri), this protein is Cbb3-type cytochrome c oxidase subunit CcoN1.